Reading from the N-terminus, the 132-residue chain is Protein FasE (132 aa).

This is Protein FasE (fasE) from Escherichia coli.